The chain runs to 383 residues: MAGSRRRIRLALLFGGRSTEHAISCISASGVLRALDRDVYDVVPVGIDTHGRWVVLPDDPTALAVTGDRLPAVVAAHGESVVLAADPTTPGLLPCRPRGGLDSVRNTLGSSDALGSSDIPGDIDVVFPLLHGPFGEDGTVQGLLEMAGLPYVGSGVFASAAAMDKQHMKALLRAAGLPVGSYAVLRAGDTLTGADQERLGLPVFVKPARGGSSIGISRVEAWADLDTAIKAARASDPKVLVESAIVGREIECGVLGILDGPGAEASVPAEITVTSSAGFYDFEAKYMSDATHFDVPANLSHAVREEVRGAAIAAFEALDCAGLARVDMFVTADDHVIINEVNTMPGFTPTSMFPRMWEASGVTYPQLVDRLVRLALRDGAGLR.

The ATP-grasp domain maps to 169 to 373 (KALLRAAGLP…YPQLVDRLVR (205 aa)). 196 to 251 (QERLGLPVFVKPARGGSSIGISRVEAWADLDTAIKAARASDPKVLVESAIVGREIE) is an ATP binding site. Residues D327, E340, and N342 each coordinate Mg(2+).

This sequence belongs to the D-alanine--D-alanine ligase family. Mg(2+) is required as a cofactor. The cofactor is Mn(2+).

The protein localises to the cytoplasm. The catalysed reaction is 2 D-alanine + ATP = D-alanyl-D-alanine + ADP + phosphate + H(+). The protein operates within cell wall biogenesis; peptidoglycan biosynthesis. Its function is as follows. Cell wall formation. This is D-alanine--D-alanine ligase from Frankia casuarinae (strain DSM 45818 / CECT 9043 / HFP020203 / CcI3).